The following is a 497-amino-acid chain: Lysophospholipid acyltransferase 5 (497 aa).

The next 6 helical transmembrane spans lie at 31 to 51, 74 to 94, 100 to 120, 173 to 193, 213 to 235, and 264 to 286; these read LLTI…ISVI, GLDT…VLLL, IFLA…YFYT, LELL…QFPF, AGVR…LRYL, and SLYK…GLTY. Active-site residues include asparagine 322 and histidine 358. Residues 339–361 form a helical membrane-spanning segment; it reads FLNNRTISYGAALGFLAVWHGYH. A glycan (N-linked (GlcNAc...) asparagine) is linked at asparagine 398. The next 2 helical transmembrane spans lie at 408–428 and 435–455; these read FITL…AFVF and IVVY…WAAF. The tract at residues 469–497 is disordered; sequence KLAGEDQKLQDSNTDKLVEEKKPEDKKSE. Positions 470 to 497 are enriched in basic and acidic residues; sequence LAGEDQKLQDSNTDKLVEEKKPEDKKSE. Serine 480 is subject to Phosphoserine.

This sequence belongs to the membrane-bound acyltransferase family. During gastrulation, expressed mainly along the midline in the presumptive mesoderm. During germ band elongation, expressed in mesoderm and endoderm primordia and in the cephalic furrow. Expression in mesoderm and endoderm lineages continues during germ band shortening. At the end of this process, no longer detected in somatic mesoderm or endoderm layer with expression restricted to anterior and posterior domains of the visceral mesoderm.

Its subcellular location is the endoplasmic reticulum. It is found in the membrane. The enzyme catalyses a 1-acyl-sn-glycero-3-phospho-L-serine + an acyl-CoA = a 1,2-diacyl-sn-glycero-3-phospho-L-serine + CoA. It catalyses the reaction 1-(9Z-octadecenoyl)-sn-glycero-3-phospho-L-serine + (9Z)-hexadecenoyl-CoA = 1-(9Z-octadecenoyl)-2-(9Z-hexadecenoyl)-sn-glycero-3-phospho-L-serine + CoA. The catalysed reaction is a 1-acyl-sn-glycero-3-phosphocholine + an acyl-CoA = a 1,2-diacyl-sn-glycero-3-phosphocholine + CoA. It carries out the reaction 1-hexadecanoyl-sn-glycero-3-phosphocholine + (9Z)-octadecenoyl-CoA = 1-hexadecanoyl-2-(9Z-octadecenoyl)-sn-glycero-3-phosphocholine + CoA. The enzyme catalyses (9Z,12Z)-octadecadienoyl-CoA + 1-hexadecanoyl-sn-glycero-3-phosphocholine = 1-hexadecanoyl-2-(9Z,12Z-octadecadienoyl)-sn-glycero-3-phosphocholine + CoA. It catalyses the reaction (5Z,8Z,11Z,14Z)-eicosatetraenoyl-CoA + 1-hexadecanoyl-sn-glycero-3-phosphocholine = 1-hexadecanoyl-2-(5Z,8Z,11Z,14Z-eicosatetraenoyl)-sn-glycero-3-phosphocholine + CoA. The catalysed reaction is (9Z)-hexadecenoyl-CoA + 1-hexadecanoyl-sn-glycero-3-phosphocholine = 1-hexadecanoyl-2-(9Z-hexadecenoyl)-sn-glycero-3-phosphocholine + CoA. The protein operates within lipid metabolism; phospholipid metabolism. Its function is as follows. Acyltransferase that mediates the acylation of lysophospholipids to produce phospholipids (glycerophospholipids). Highest activity with lysophosphatidylcholine (1-acyl-sn-glycero-3-phosphocholine or LPC) producing phosphatidylcholine (1,2-diacyl-sn-glycero-3-phosphocholine or PC) (LPCAT activity), but also converts lysophosphatidylserine (1-acyl-2-hydroxy-sn-glycero-3-phospho-L-serine or LPS) to phosphatidylserine (1,2-diacyl-sn-glycero-3-phospho-L-serine or PS) (LPSAT activity). Has a preference for unsaturated fatty acids of at least 16 carbons such as oleoyl-CoA ((9Z)-octadecenoyl-CoA) and palmitoleoyl-CoA ((9Z)-hexadecenoyl-CoA). Glycerophospholipids are important structural and functional components of cellular membrane, acyl-chain remodeling regulates the molecular species distribution of glycerophospholipids which can affect membrane fluidity and curvature. Essential for fertility and viability together with Oysgedart (Oys). Required for germ cells to migrate into the mesoderm. This is Lysophospholipid acyltransferase 5 from Drosophila melanogaster (Fruit fly).